The following is a 206-amino-acid chain: Probable GTP-binding protein EngB (206 aa).

The region spanning Asp-23 to Glu-195 is the EngB-type G domain. GTP-binding positions include Gly-31–Ser-38, Gly-58–Leu-62, Asp-76–Gly-79, Thr-143–Asp-146, and Phe-174–Ala-176. Positions 38 and 60 each coordinate Mg(2+).

This sequence belongs to the TRAFAC class TrmE-Era-EngA-EngB-Septin-like GTPase superfamily. EngB GTPase family. The cofactor is Mg(2+).

Its function is as follows. Necessary for normal cell division and for the maintenance of normal septation. The sequence is that of Probable GTP-binding protein EngB from Geobacter sulfurreducens (strain ATCC 51573 / DSM 12127 / PCA).